The following is a 380-amino-acid chain: S-adenosylmethionine synthase (380 aa).

His-15 contacts ATP. Residue Asp-17 participates in Mg(2+) binding. Residue Glu-43 coordinates K(+). L-methionine is bound by residues Glu-56 and Gln-99. The flexible loop stretch occupies residues Gln-99–Asn-109. ATP is bound by residues Asp-164–Lys-166, Arg-230–Phe-231, Asp-239, Arg-245–Lys-246, and Lys-266. L-methionine is bound at residue Asp-239. Lys-270 provides a ligand contact to L-methionine.

Belongs to the AdoMet synthase family. In terms of assembly, homotetramer; dimer of dimers. Mg(2+) serves as cofactor. K(+) is required as a cofactor.

The protein resides in the cytoplasm. The catalysed reaction is L-methionine + ATP + H2O = S-adenosyl-L-methionine + phosphate + diphosphate. Its pathway is amino-acid biosynthesis; S-adenosyl-L-methionine biosynthesis; S-adenosyl-L-methionine from L-methionine: step 1/1. Functionally, catalyzes the formation of S-adenosylmethionine (AdoMet) from methionine and ATP. The overall synthetic reaction is composed of two sequential steps, AdoMet formation and the subsequent tripolyphosphate hydrolysis which occurs prior to release of AdoMet from the enzyme. The protein is S-adenosylmethionine synthase of Rickettsia prowazekii (strain Madrid E).